We begin with the raw amino-acid sequence, 631 residues long: Chaperone protein HtpG (631 aa).

The segment at 1–339 is a; substrate-binding; sequence MSAQKETLGF…SNDLPLNVSR (339 aa). The segment at 340–556 is b; that stretch reads EILQESKDID…EHDMSAHLER (217 aa). The interval 557–631 is c; sequence MLKAAGQKIE…INKLMLELSV (75 aa).

Belongs to the heat shock protein 90 family. Homodimer.

The protein localises to the cytoplasm. Functionally, molecular chaperone. Has ATPase activity. The sequence is that of Chaperone protein HtpG from Chromobacterium violaceum (strain ATCC 12472 / DSM 30191 / JCM 1249 / CCUG 213 / NBRC 12614 / NCIMB 9131 / NCTC 9757 / MK).